We begin with the raw amino-acid sequence, 70 residues long: Small ribosomal subunit protein bS21 (70 aa).

The protein belongs to the bacterial ribosomal protein bS21 family.

The sequence is that of Small ribosomal subunit protein bS21 from Albidiferax ferrireducens (strain ATCC BAA-621 / DSM 15236 / T118) (Rhodoferax ferrireducens).